We begin with the raw amino-acid sequence, 409 residues long: F-box protein At3g17320 (409 aa).

Residues 1–47 form the F-box domain; the sequence is MTKISDLPRDLAEEVLSRVPVTYLRAIRFTCKKWNTLTKRRSFTKKL.

The chain is F-box protein At3g17320 from Arabidopsis thaliana (Mouse-ear cress).